The primary structure comprises 451 residues: Phosphoglucosamine mutase (451 aa).

The active-site Phosphoserine intermediate is Ser102. Mg(2+) is bound by residues Ser102, Asp243, Asp245, and Asp247. Ser102 is subject to Phosphoserine.

This sequence belongs to the phosphohexose mutase family. Mg(2+) serves as cofactor. In terms of processing, activated by phosphorylation.

The enzyme catalyses alpha-D-glucosamine 1-phosphate = D-glucosamine 6-phosphate. Functionally, catalyzes the conversion of glucosamine-6-phosphate to glucosamine-1-phosphate. This is Phosphoglucosamine mutase from Sinorhizobium medicae (strain WSM419) (Ensifer medicae).